The following is a 324-amino-acid chain: Alkanal monooxygenase beta chain (324 aa).

It belongs to the bacterial luciferase oxidoreductase family. As to quaternary structure, heterodimer of an alpha and a beta chain.

The catalysed reaction is a long-chain fatty aldehyde + FMNH2 + O2 = a long-chain fatty acid + hnu + FMN + H2O + 2 H(+). Light-emitting reaction in luminous bacteria. The specific role of the beta subunit is unknown, but it is absolutely required for bioluminescence activity. The protein is Alkanal monooxygenase beta chain (luxB) of Photorhabdus luminescens (Xenorhabdus luminescens).